We begin with the raw amino-acid sequence, 147 residues long: Large ribosomal subunit protein bL9 (147 aa).

The protein belongs to the bacterial ribosomal protein bL9 family.

In terms of biological role, binds to the 23S rRNA. The protein is Large ribosomal subunit protein bL9 of Bacteroides fragilis (strain YCH46).